The sequence spans 608 residues: Translation initiation factor RLI1 (608 aa).

4Fe-4S ferredoxin-type domains are found at residues arginine 7–isoleucine 39 and lysine 46–leucine 75. 2 ABC transporter domains span residues isoleucine 70–glycine 320 and leucine 345–leucine 568. Residue glycine 110–serine 117 participates in ATP binding. Phosphoserine is present on serine 349. Glycine 385 to threonine 392 is an ATP binding site.

It belongs to the ABC transporter superfamily. ABCE family. As to quaternary structure, component of the multifactor complex (MFC) composed of at least RLI1, the eIF2 subunit SUI2, TIF5/eIF5, and the eIF3 subunits PRT1, HCR1, NIP1, RPG1, TIF34 and TIF35. The complex associates with pre-initiation complexes. Interacts with the complex YAE1:LTO1; the complex bridges the interaction between the CIA complex and RLI1.

Its subcellular location is the cytoplasm. It localises to the nucleus. Functionally, component of the multifactor complex (MFC) involved in translation initiation. Required for the binding of MFC to the 40S ribosome. Required for the processing and nuclear export of the 60S and 40S ribosomal subunits. This chain is Translation initiation factor RLI1 (RLI1), found in Saccharomyces cerevisiae (strain ATCC 204508 / S288c) (Baker's yeast).